We begin with the raw amino-acid sequence, 158 residues long: Large ribosomal subunit protein uL30 (158 aa).

This sequence belongs to the universal ribosomal protein uL30 family. Part of the 50S ribosomal subunit.

This Sulfurisphaera tokodaii (strain DSM 16993 / JCM 10545 / NBRC 100140 / 7) (Sulfolobus tokodaii) protein is Large ribosomal subunit protein uL30.